An 833-amino-acid chain; its full sequence is Leucine--tRNA ligase (833 aa).

Positions 41–52 (PYPSGAGLHVGH) match the 'HIGH' region motif. A 'KMSKS' region motif is present at residues 610 to 614 (KMSKS). Residue Lys-613 participates in ATP binding.

It belongs to the class-I aminoacyl-tRNA synthetase family.

The protein localises to the cytoplasm. The enzyme catalyses tRNA(Leu) + L-leucine + ATP = L-leucyl-tRNA(Leu) + AMP + diphosphate. The protein is Leucine--tRNA ligase of Streptococcus pyogenes serotype M5 (strain Manfredo).